A 153-amino-acid polypeptide reads, in one-letter code: Small ribosomal subunit protein uS9 (153 aa).

Positions 1–19 (MTAPADEAPAVEDAPVAED) are enriched in low complexity. Disordered regions lie at residues 1 to 23 (MTAP…IAPV) and 121 to 153 (LKKA…YSKR). The span at 129 to 138 (RDSREKERKK) shows a compositional bias: basic and acidic residues. Over residues 139–153 (YGLKKARKAPQYSKR) the composition is skewed to basic residues.

This sequence belongs to the universal ribosomal protein uS9 family.

This is Small ribosomal subunit protein uS9 from Saccharopolyspora erythraea (strain ATCC 11635 / DSM 40517 / JCM 4748 / NBRC 13426 / NCIMB 8594 / NRRL 2338).